A 112-amino-acid chain; its full sequence is Putative pterin-4-alpha-carbinolamine dehydratase (112 aa).

The protein belongs to the pterin-4-alpha-carbinolamine dehydratase family.

The enzyme catalyses (4aS,6R)-4a-hydroxy-L-erythro-5,6,7,8-tetrahydrobiopterin = (6R)-L-erythro-6,7-dihydrobiopterin + H2O. The protein is Putative pterin-4-alpha-carbinolamine dehydratase of Shewanella piezotolerans (strain WP3 / JCM 13877).